We begin with the raw amino-acid sequence, 308 residues long: Ornithine carbamoyltransferase (308 aa).

Residues 56-59 (STRT), Gln83, Arg107, and 134-137 (HPCQ) each bind carbamoyl phosphate. L-ornithine contacts are provided by residues Asn165, Asp225, and 229–230 (SM). Residues 266–267 (CL) and Arg294 contribute to the carbamoyl phosphate site.

This sequence belongs to the aspartate/ornithine carbamoyltransferase superfamily. OTCase family.

Its subcellular location is the cytoplasm. It catalyses the reaction carbamoyl phosphate + L-ornithine = L-citrulline + phosphate + H(+). The protein operates within amino-acid biosynthesis; L-arginine biosynthesis; L-arginine from L-ornithine and carbamoyl phosphate: step 1/3. Its function is as follows. Reversibly catalyzes the transfer of the carbamoyl group from carbamoyl phosphate (CP) to the N(epsilon) atom of ornithine (ORN) to produce L-citrulline. The chain is Ornithine carbamoyltransferase from Paracoccus denitrificans (strain Pd 1222).